We begin with the raw amino-acid sequence, 166 residues long: Large ribosomal subunit protein uL10 (166 aa).

Belongs to the universal ribosomal protein uL10 family. As to quaternary structure, part of the ribosomal stalk of the 50S ribosomal subunit. The N-terminus interacts with L11 and the large rRNA to form the base of the stalk. The C-terminus forms an elongated spine to which L12 dimers bind in a sequential fashion forming a multimeric L10(L12)X complex.

Its function is as follows. Forms part of the ribosomal stalk, playing a central role in the interaction of the ribosome with GTP-bound translation factors. This is Large ribosomal subunit protein uL10 from Pseudomonas syringae pv. syringae (strain B728a).